The sequence spans 310 residues: Porphobilinogen deaminase (310 aa).

S-(dipyrrolylmethanemethyl)cysteine is present on Cys240.

The protein belongs to the HMBS family. In terms of assembly, monomer. Requires dipyrromethane as cofactor.

It carries out the reaction 4 porphobilinogen + H2O = hydroxymethylbilane + 4 NH4(+). It functions in the pathway porphyrin-containing compound metabolism; protoporphyrin-IX biosynthesis; coproporphyrinogen-III from 5-aminolevulinate: step 2/4. In terms of biological role, tetrapolymerization of the monopyrrole PBG into the hydroxymethylbilane pre-uroporphyrinogen in several discrete steps. This chain is Porphobilinogen deaminase, found in Desulfosudis oleivorans (strain DSM 6200 / JCM 39069 / Hxd3) (Desulfococcus oleovorans).